Reading from the N-terminus, the 105-residue chain is Small ribosomal subunit protein uS10 (105 aa).

This sequence belongs to the universal ribosomal protein uS10 family. Part of the 30S ribosomal subunit.

Involved in the binding of tRNA to the ribosomes. In Phytoplasma australiense, this protein is Small ribosomal subunit protein uS10.